Here is a 240-residue protein sequence, read N- to C-terminus: Protein MGARP (240 aa).

Topologically, residues 1–45 are cytoplasmic; that stretch reads MYLRRAVSKTLALPLRAPPGPAPLRKDASLRWISSNKFPGSSGSN. The helical; Anchor for type IV membrane protein transmembrane segment at 46–64 threads the bilayer; that stretch reads MIYYLVVGVTVSAGGYYTY. The Mitochondrial intermembrane portion of the chain corresponds to 65–240; that stretch reads KRVTSGKAKR…AGSEAASAQG (176 aa). The disordered stretch occupies residues 72–240; sequence AKRSDHVTDL…AGSEAASAQG (169 aa). Residues 73-87 are compositionally biased toward basic and acidic residues; sequence KRSDHVTDLKEKTKA. 2 stretches are compositionally biased toward low complexity: residues 166 to 183 and 228 to 240; these read TVET…VTST and EACA…SAQG.

Interacts with RHOT1/Miro-1, RHOT2/Miro-2, TRAK1/OIP106 and TRAK2/GRIF1.

The protein resides in the mitochondrion. Its subcellular location is the mitochondrion outer membrane. It localises to the mitochondrion inner membrane. In terms of biological role, plays a role in the trafficking of mitochondria along microtubules. Regulates the kinesin-mediated axonal transport of mitochondria to nerve terminals along microtubules during hypoxia. Participates in the translocation of TRAK2/GRIF1 from the cytoplasm to the mitochondrion. Also plays a role in steroidogenesis through maintenance of mitochondrial abundance and morphology. Plays an inhibitory role during neocortex development by regulating mitochondrial morphology, distribution and motility in neocortical neurons. In Bos taurus (Bovine), this protein is Protein MGARP (MGARP).